A 269-amino-acid chain; its full sequence is 4-hydroxy-tetrahydrodipicolinate reductase (269 aa).

NAD(+) contacts are provided by residues 10–15 (GANGRM), glutamate 36, 99–101 (GTT), and 123–126 (AANF). The Proton donor/acceptor role is filled by histidine 156. (S)-2,3,4,5-tetrahydrodipicolinate is bound at residue histidine 157. The active-site Proton donor is lysine 160. 166–167 (GT) contacts (S)-2,3,4,5-tetrahydrodipicolinate.

It belongs to the DapB family.

It is found in the cytoplasm. The enzyme catalyses (S)-2,3,4,5-tetrahydrodipicolinate + NAD(+) + H2O = (2S,4S)-4-hydroxy-2,3,4,5-tetrahydrodipicolinate + NADH + H(+). The catalysed reaction is (S)-2,3,4,5-tetrahydrodipicolinate + NADP(+) + H2O = (2S,4S)-4-hydroxy-2,3,4,5-tetrahydrodipicolinate + NADPH + H(+). It functions in the pathway amino-acid biosynthesis; L-lysine biosynthesis via DAP pathway; (S)-tetrahydrodipicolinate from L-aspartate: step 4/4. Catalyzes the conversion of 4-hydroxy-tetrahydrodipicolinate (HTPA) to tetrahydrodipicolinate. The chain is 4-hydroxy-tetrahydrodipicolinate reductase from Neisseria gonorrhoeae (strain ATCC 700825 / FA 1090).